Consider the following 184-residue polypeptide: GTPase RhebL1 (184 aa).

GTP-binding positions include 16–21 (SVGKTS), 32–38 (LEGYDPT), Gly63, 119–122 (NKAD), and 149–150 (SA). Positions 35-43 (YDPTVENTY) match the Effector region motif. Thr38 is a Mg(2+) binding site. Position 181 is a cysteine methyl ester (Cys181). A lipid anchor (S-farnesyl cysteine) is attached at Cys181. Residues 182–184 (YLM) constitute a propeptide, removed in mature form.

The protein belongs to the small GTPase superfamily. Rheb family. Interacts with MTOR.

The protein resides in the endomembrane system. The protein localises to the cytoplasm. The enzyme catalyses GTP + H2O = GDP + phosphate + H(+). Binds GTP and exhibits intrinsic GTPase activity. May activate NF-kappa-B-mediated gene transcription. Promotes signal transduction through MTOR, activates RPS6KB1, and is a downstream target of the small GTPase-activating proteins TSC1 and TSC2. This is GTPase RhebL1 (Rhebl1) from Mus musculus (Mouse).